The sequence spans 149 residues: Glutamate mutase sigma subunit (149 aa).

The 134-residue stretch at 5-138 (DPTVVLGTIG…DAVKTELDVD (134 aa)) folds into the B12-binding domain. Adenosylcob(III)alamin-binding positions include 15–19 (SDAHA), histidine 18, 63–65 (SSL), and 94–98 (NLAVG).

It belongs to the methylaspartate mutase GlmS subunit family. Heterotetramer composed of 2 epsilon subunits (GlmE) and 2 sigma subunits (GlmS). GlmE exists as a homodimer and GlmS as a monomer. Adenosylcob(III)alamin is required as a cofactor.

The catalysed reaction is (2S,3S)-3-methyl-L-aspartate = L-glutamate. Its pathway is amino-acid degradation; L-glutamate degradation via mesaconate pathway; acetate and pyruvate from L-glutamate: step 1/4. In terms of biological role, catalyzes the carbon skeleton rearrangement of L-glutamate to L-threo-3-methylaspartate ((2S,3S)-3-methylaspartate). This Halobacterium salinarum (strain ATCC 700922 / JCM 11081 / NRC-1) (Halobacterium halobium) protein is Glutamate mutase sigma subunit.